We begin with the raw amino-acid sequence, 291 residues long: 33 kDa chaperonin (291 aa).

2 disulfide bridges follow: cysteine 229–cysteine 231 and cysteine 262–cysteine 265.

This sequence belongs to the HSP33 family. Post-translationally, under oxidizing conditions two disulfide bonds are formed involving the reactive cysteines. Under reducing conditions zinc is bound to the reactive cysteines and the protein is inactive.

It localises to the cytoplasm. Redox regulated molecular chaperone. Protects both thermally unfolding and oxidatively damaged proteins from irreversible aggregation. Plays an important role in the bacterial defense system toward oxidative stress. The sequence is that of 33 kDa chaperonin from Vibrio parahaemolyticus serotype O3:K6 (strain RIMD 2210633).